A 409-amino-acid chain; its full sequence is Arginine deiminase (409 aa).

The active-site Amidino-cysteine intermediate is the Cys399.

This sequence belongs to the arginine deiminase family.

It is found in the cytoplasm. It catalyses the reaction L-arginine + H2O = L-citrulline + NH4(+). It participates in amino-acid degradation; L-arginine degradation via ADI pathway; carbamoyl phosphate from L-arginine: step 1/2. The polypeptide is Arginine deiminase (arcA) (Latilactobacillus sakei (Lactobacillus sakei)).